The primary structure comprises 754 residues: 1,4-alpha-glucan branching enzyme GlgB (754 aa).

The Nucleophile role is filled by Asp-431. Glu-484 serves as the catalytic Proton donor.

It belongs to the glycosyl hydrolase 13 family. GlgB subfamily. In terms of assembly, monomer.

The enzyme catalyses Transfers a segment of a (1-&gt;4)-alpha-D-glucan chain to a primary hydroxy group in a similar glucan chain.. It functions in the pathway glycan biosynthesis; glycogen biosynthesis. Its function is as follows. Catalyzes the formation of the alpha-1,6-glucosidic linkages in glycogen by scission of a 1,4-alpha-linked oligosaccharide from growing alpha-1,4-glucan chains and the subsequent attachment of the oligosaccharide to the alpha-1,6 position. This chain is 1,4-alpha-glucan branching enzyme GlgB, found in Prochlorococcus marinus (strain AS9601).